The primary structure comprises 124 residues: Small ribosomal subunit protein uS12 (124 aa).

3-methylthioaspartic acid is present on aspartate 89. Positions 105 to 124 (QGVKNRGQARSRYGAKKEKK) are disordered. The segment covering 111 to 124 (GQARSRYGAKKEKK) has biased composition (basic residues).

The protein belongs to the universal ribosomal protein uS12 family. Part of the 30S ribosomal subunit. Contacts proteins S8 and S17. May interact with IF1 in the 30S initiation complex.

In terms of biological role, with S4 and S5 plays an important role in translational accuracy. Interacts with and stabilizes bases of the 16S rRNA that are involved in tRNA selection in the A site and with the mRNA backbone. Located at the interface of the 30S and 50S subunits, it traverses the body of the 30S subunit contacting proteins on the other side and probably holding the rRNA structure together. The combined cluster of proteins S8, S12 and S17 appears to hold together the shoulder and platform of the 30S subunit. The sequence is that of Small ribosomal subunit protein uS12 from Micrococcus luteus (Micrococcus lysodeikticus).